The primary structure comprises 355 residues: Electron transfer flavoprotein subunit alpha, mitochondrial (355 aa).

Residue 295–323 participates in FAD binding; that stretch reads LYIAVGISGAIQHLAGMKDSKVIVAINKD.

It belongs to the ETF alpha-subunit/FixB family. As to quaternary structure, heterodimer of an alpha and a beta subunit. The cofactor is FAD.

It is found in the mitochondrion matrix. Functionally, the electron transfer flavoprotein serves as a specific electron acceptor for several dehydrogenases, including five acyl-CoA dehydrogenases, glutaryl-CoA and sarcosine dehydrogenase. It transfers the electrons to the main mitochondrial respiratory chain via ETF-ubiquinone oxidoreductase (ETF dehydrogenase). The polypeptide is Electron transfer flavoprotein subunit alpha, mitochondrial (etfa) (Dictyostelium discoideum (Social amoeba)).